A 130-amino-acid chain; its full sequence is Small ribosomal subunit protein uS9 (130 aa).

The protein belongs to the universal ribosomal protein uS9 family.

This chain is Small ribosomal subunit protein uS9, found in Clostridium beijerinckii (strain ATCC 51743 / NCIMB 8052) (Clostridium acetobutylicum).